A 344-amino-acid polypeptide reads, in one-letter code: Anthranilate phosphoribosyltransferase (344 aa).

5-phospho-alpha-D-ribose 1-diphosphate contacts are provided by residues glycine 83, 86 to 87 (GD), threonine 91, 93 to 96 (NIST), 111 to 119 (KHGGRSVSS), and serine 123. Anthranilate is bound at residue glycine 83. Residue serine 95 coordinates Mg(2+). Arginine 169 lines the anthranilate pocket. The Mg(2+) site is built by aspartate 228 and glutamate 229.

This sequence belongs to the anthranilate phosphoribosyltransferase family. As to quaternary structure, homodimer. Requires Mg(2+) as cofactor.

The catalysed reaction is N-(5-phospho-beta-D-ribosyl)anthranilate + diphosphate = 5-phospho-alpha-D-ribose 1-diphosphate + anthranilate. It functions in the pathway amino-acid biosynthesis; L-tryptophan biosynthesis; L-tryptophan from chorismate: step 2/5. Functionally, catalyzes the transfer of the phosphoribosyl group of 5-phosphorylribose-1-pyrophosphate (PRPP) to anthranilate to yield N-(5'-phosphoribosyl)-anthranilate (PRA). The chain is Anthranilate phosphoribosyltransferase from Methylibium petroleiphilum (strain ATCC BAA-1232 / LMG 22953 / PM1).